Consider the following 195-residue polypeptide: Putative archaetidylserine decarboxylase proenzyme (195 aa).

Residue S159 is the Schiff-base intermediate with substrate; via pyruvic acid of the active site. At S159 the chain carries Pyruvic acid (Ser); by autocatalysis.

It belongs to the phosphatidylserine decarboxylase family. PSD-A subfamily. Heterodimer of a large membrane-associated beta subunit and a small pyruvoyl-containing alpha subunit. It depends on pyruvate as a cofactor. Is synthesized initially as an inactive proenzyme. Formation of the active enzyme involves a self-maturation process in which the active site pyruvoyl group is generated from an internal serine residue via an autocatalytic post-translational modification. Two non-identical subunits are generated from the proenzyme in this reaction, and the pyruvate is formed at the N-terminus of the alpha chain, which is derived from the carboxyl end of the proenzyme. The autoendoproteolytic cleavage occurs by a canonical serine protease mechanism, in which the side chain hydroxyl group of the serine supplies its oxygen atom to form the C-terminus of the beta chain, while the remainder of the serine residue undergoes an oxidative deamination to produce ammonia and the pyruvoyl prosthetic group on the alpha chain. During this reaction, the Ser that is part of the protease active site of the proenzyme becomes the pyruvoyl prosthetic group, which constitutes an essential element of the active site of the mature decarboxylase. In terms of processing, is synthesized initially as an inactive proenzyme. Formation of the active enzyme involves a self-maturation process in which the active site pyruvoyl group is generated from an internal serine residue via an autocatalytic post-translational modification. Two non-identical subunits are generated from the proenzyme in this reaction, and the pyruvate is formed at the N-terminus of the alpha chain, which is derived from the carboxyl end of the proenzyme. The post-translation cleavage follows an unusual pathway, termed non-hydrolytic serinolysis, in which the side chain hydroxyl group of the serine supplies its oxygen atom to form the C-terminus of the beta chain, while the remainder of the serine residue undergoes an oxidative deamination to produce ammonia and the pyruvoyl prosthetic group on the alpha chain.

It localises to the cell membrane. The enzyme catalyses archaetidylserine + H(+) = archaetidylethanolamine + CO2. Functionally, catalyzes the formation of archaetidylethanolamine (PtdEtn) from archaetidylserine (PtdSer). The protein is Putative archaetidylserine decarboxylase proenzyme of Archaeoglobus fulgidus (strain ATCC 49558 / DSM 4304 / JCM 9628 / NBRC 100126 / VC-16).